We begin with the raw amino-acid sequence, 114 residues long: Biofilm growth-associated repressor (114 aa).

In terms of domain architecture, HTH arsR-type spans 17–111 (DMEKRANEVA…ALYTIFCTQE (95 aa)). Positions 51–74 (VGELEQQIGIGQPTLSQQLGVLRE) form a DNA-binding region, H-T-H motif.

Functionally, represses an operon that probably comprises itself, PD_1892, PD_1893, PD_1894 and blh. Binds to a palindromic AT-rich sequence spanning the -10 region of the blh promoter and blocks transcription of the operon. The chain is Biofilm growth-associated repressor (bigR) from Xylella fastidiosa (strain Temecula1 / ATCC 700964).